The primary structure comprises 257 residues: 3-deoxy-manno-octulosonate cytidylyltransferase (257 aa).

This sequence belongs to the KdsB family.

The protein resides in the cytoplasm. It carries out the reaction 3-deoxy-alpha-D-manno-oct-2-ulosonate + CTP = CMP-3-deoxy-beta-D-manno-octulosonate + diphosphate. It functions in the pathway nucleotide-sugar biosynthesis; CMP-3-deoxy-D-manno-octulosonate biosynthesis; CMP-3-deoxy-D-manno-octulosonate from 3-deoxy-D-manno-octulosonate and CTP: step 1/1. Its pathway is bacterial outer membrane biogenesis; lipopolysaccharide biosynthesis. Functionally, activates KDO (a required 8-carbon sugar) for incorporation into bacterial lipopolysaccharide in Gram-negative bacteria. The protein is 3-deoxy-manno-octulosonate cytidylyltransferase of Methylobacillus flagellatus (strain ATCC 51484 / DSM 6875 / VKM B-1610 / KT).